The primary structure comprises 418 residues: Hydroxysqualene dehydroxylase (418 aa).

This sequence belongs to the HpnE family.

It catalyses the reaction squalene + FAD + H2O + H(+) = hydroxysqualene + FADH2. It participates in secondary metabolite biosynthesis; hopanoid biosynthesis. Functionally, involved in the biosynthesis of the hopanoid precursor squalene (SQ) from farnesyl diphosphate (FPP). Catalyzes the third (last) step, the reduction of hydroxysqualene (HSQ) to SQ. The polypeptide is Hydroxysqualene dehydroxylase (Rhodopseudomonas palustris (strain ATCC BAA-98 / CGA009)).